Consider the following 99-residue polypeptide: Large ribosomal subunit protein eL21 (99 aa).

This sequence belongs to the eukaryotic ribosomal protein eL21 family.

The chain is Large ribosomal subunit protein eL21 from Ignicoccus hospitalis (strain KIN4/I / DSM 18386 / JCM 14125).